The chain runs to 458 residues: MKEDFKKFKEFIYKKRVGVVGIGVSNIPLINFLIKLGAEVTAFDKKTEEELGEVSSDFKNKGVNLELGDNYLDKLTGFDVVFKTPSMRIDSECLVKVKKEGAYVTSEMEEFVRYCKAKIYGITGSDGKTTTTTIISKILQEEGYKTWVGGNIGTPLFAQIEEIKAEDRVVLELSSFQLMTMNLPMDIAVCTNLAPNHLDMHKDMQEYIDAKKNIFLYQGSTNTLVVNRENEITYGFEAEAKGEVREFSSKREVKEGAYYKDGILYLSGKEVCKKDNIVIKGMHNVENYLAAFIATKDDVSIENMKKVAESFNGVEHRCELVREINGVKYYNDSIASSPNRTLAGLKAFDKKVILIAGGYDKHLLFEPLANEGYPYIKELILLGQTKEKIKDVFKDLEASKGIKINISEVSTLEEAVKKAQDLAKQGDIITLSPACASFDMFPNFMIRGNKFKEIVNEL.

ATP is bound at residue 124–130 (GSDGKTT).

The protein belongs to the MurCDEF family.

It is found in the cytoplasm. It catalyses the reaction UDP-N-acetyl-alpha-D-muramoyl-L-alanine + D-glutamate + ATP = UDP-N-acetyl-alpha-D-muramoyl-L-alanyl-D-glutamate + ADP + phosphate + H(+). The protein operates within cell wall biogenesis; peptidoglycan biosynthesis. In terms of biological role, cell wall formation. Catalyzes the addition of glutamate to the nucleotide precursor UDP-N-acetylmuramoyl-L-alanine (UMA). The polypeptide is UDP-N-acetylmuramoylalanine--D-glutamate ligase (Clostridium botulinum (strain Alaska E43 / Type E3)).